We begin with the raw amino-acid sequence, 711 residues long: Probable cyclic nucleotide-gated ion channel 10 (711 aa).

Topologically, residues 1 to 81 (MAFSHDNRVR…QDSFLQNWNK (81 aa)) are cytoplasmic. The helical transmembrane segment at 82-102 (IFLFACVVALAIDPLFFYIPI) threads the bilayer. Residues 103–116 (VDSARHCLTLDSKL) lie on the Extracellular side of the membrane. The chain crosses the membrane as a helical span at residues 117-137 (EIAASLLRTLIDAFYIIHIVF). At 138-170 (QFRTAYIAPSSRVFGRGELVDDAKAIALKYLSS) the chain is on the cytoplasmic side. Residues 171-191 (YFIIDLLSILPLPQIVVLAVI) traverse the membrane as a helical segment. The Extracellular segment spans residues 192-204 (PSVNQPVSLLTKD). A helical transmembrane segment spans residues 205 to 225 (YLKFSIIAQYVPRILRMYPLY). Residues 226-243 (TEVTRTSGIVTETAWAGA) lie on the Cytoplasmic side of the membrane. Residues 244–264 (AWNLSLYMLASHVFGALWYLI) form a helical membrane-spanning segment. Over 265–366 (SVEREDRCWQ…GQNLQTSKFV (102 aa)) the chain is Extracellular. The helical transmembrane segment at 367-387 (GEIIFAISICISGLVLFALLI) threads the bilayer. The Cytoplasmic portion of the chain corresponds to 388-711 (GNMQKYLEST…DFTANHTTDP (324 aa)). A nucleoside 3',5'-cyclic phosphate-binding positions include 473-603 (LFEI…TFRF) and Glu-544. The calmodulin-binding stretch occupies residues 589–604 (FRRLHSKQLQHTFRFY). The IQ domain maps to 609 to 638 (RTWSVSFIQAAWRRYCRRKLAKSLRDEEDR). The interval 689 to 711 (YTLPLLPQKPTEPDFTANHTTDP) is disordered.

This sequence belongs to the cyclic nucleotide-gated cation channel (TC 1.A.1.5) family. As to quaternary structure, homotetramer or heterotetramer.

It is found in the cell membrane. Its function is as follows. Probable cyclic nucleotide-gated ion channel. The polypeptide is Probable cyclic nucleotide-gated ion channel 10 (CNGC10) (Arabidopsis thaliana (Mouse-ear cress)).